The following is a 101-amino-acid chain: MRDRGKLVIWPVYLDQTKSRSSGRIISRKNAIKEPQLNEIKEAARQLGLNPEVEPHKAYPKSWWEVSGRVLVDDNGPKTVIAKQIALAIKKMRGPESSAKA.

Belongs to the SRP19 family. As to quaternary structure, part of the signal recognition particle protein translocation system, which is composed of SRP and FtsY. Archaeal SRP consists of a 7S RNA molecule of 300 nucleotides and two protein subunits: SRP54 and SRP19.

The protein localises to the cytoplasm. Its function is as follows. Involved in targeting and insertion of nascent membrane proteins into the cytoplasmic membrane. Binds directly to 7S RNA and mediates binding of the 54 kDa subunit of the SRP. In Methanosarcina barkeri (strain Fusaro / DSM 804), this protein is Signal recognition particle 19 kDa protein.